A 324-amino-acid chain; its full sequence is Glyoxylate/hydroxypyruvate reductase B (324 aa).

Residues Arg-237 and Glu-266 contribute to the active site. His-285 serves as the catalytic Proton donor.

This sequence belongs to the D-isomer specific 2-hydroxyacid dehydrogenase family. GhrB subfamily. As to quaternary structure, homodimer.

The protein localises to the cytoplasm. The enzyme catalyses glycolate + NADP(+) = glyoxylate + NADPH + H(+). The catalysed reaction is (R)-glycerate + NAD(+) = 3-hydroxypyruvate + NADH + H(+). It carries out the reaction (R)-glycerate + NADP(+) = 3-hydroxypyruvate + NADPH + H(+). Functionally, catalyzes the NADPH-dependent reduction of glyoxylate and hydroxypyruvate into glycolate and glycerate, respectively. This chain is Glyoxylate/hydroxypyruvate reductase B, found in Escherichia coli (strain SMS-3-5 / SECEC).